Reading from the N-terminus, the 566-residue chain is Arginine--tRNA ligase (566 aa).

Residues 129–139 carry the 'HIGH' region motif; sequence ANPTGPLHIGH.

Belongs to the class-I aminoacyl-tRNA synthetase family. As to quaternary structure, monomer.

It localises to the cytoplasm. It catalyses the reaction tRNA(Arg) + L-arginine + ATP = L-arginyl-tRNA(Arg) + AMP + diphosphate. The protein is Arginine--tRNA ligase of Wolbachia pipientis subsp. Culex pipiens (strain wPip).